Consider the following 325-residue polypeptide: Serpentine receptor class gamma-16 (325 aa).

Helical transmembrane passes span 25 to 45 (FCLY…ILLI), 65 to 85 (VVSL…MFIP), 87 to 107 (LCPL…MYYW), 144 to 164 (LAVT…WNLL), 187 to 207 (WASL…FTII), 232 to 252 (FVSL…LIFV), and 264 to 284 (LLFQ…IIML).

The protein belongs to the nematode receptor-like protein srg family.

Its subcellular location is the membrane. This Caenorhabditis elegans protein is Serpentine receptor class gamma-16 (srg-16).